A 169-amino-acid polypeptide reads, in one-letter code: Peptide deformylase (169 aa).

Fe cation-binding residues include Cys-91 and His-133. The active site involves Glu-134. His-137 provides a ligand contact to Fe cation.

Belongs to the polypeptide deformylase family. It depends on Fe(2+) as a cofactor.

The enzyme catalyses N-terminal N-formyl-L-methionyl-[peptide] + H2O = N-terminal L-methionyl-[peptide] + formate. In terms of biological role, removes the formyl group from the N-terminal Met of newly synthesized proteins. Requires at least a dipeptide for an efficient rate of reaction. N-terminal L-methionine is a prerequisite for activity but the enzyme has broad specificity at other positions. This Salmonella agona (strain SL483) protein is Peptide deformylase.